Reading from the N-terminus, the 195-residue chain is Probable GTP-binding protein EngB (195 aa).

Residues 22–195 form the EngB-type G domain; that stretch reads GLPEIALAGR…WGAIKKMINR (174 aa). GTP is bound by residues 30 to 37, 57 to 61, 75 to 78, 142 to 145, and 174 to 176; these read GRSNVGKS, GKTQT, DVPG, TKAD, and FSS. Mg(2+)-binding residues include Ser37 and Thr59.

The protein belongs to the TRAFAC class TrmE-Era-EngA-EngB-Septin-like GTPase superfamily. EngB GTPase family. Mg(2+) is required as a cofactor.

In terms of biological role, necessary for normal cell division and for the maintenance of normal septation. Functionally, binds GTP and GDP. In Bacillus subtilis (strain 168), this protein is Probable GTP-binding protein EngB.